Consider the following 467-residue polypeptide: Glutamate--tRNA ligase (467 aa).

Residues 9 to 19 (PSPTGFLHIGG) carry the 'HIGH' region motif. The short motif at 250 to 254 (KLSKR) is the 'KMSKS' region element. Lys-253 contacts ATP.

The protein belongs to the class-I aminoacyl-tRNA synthetase family. Glutamate--tRNA ligase type 1 subfamily. In terms of assembly, monomer.

The protein localises to the cytoplasm. The enzyme catalyses tRNA(Glu) + L-glutamate + ATP = L-glutamyl-tRNA(Glu) + AMP + diphosphate. In terms of biological role, catalyzes the attachment of glutamate to tRNA(Glu) in a two-step reaction: glutamate is first activated by ATP to form Glu-AMP and then transferred to the acceptor end of tRNA(Glu). This Mesomycoplasma hyopneumoniae (strain 232) (Mycoplasma hyopneumoniae) protein is Glutamate--tRNA ligase.